A 108-amino-acid chain; its full sequence is UPF0060 membrane protein Spro_2289 (108 aa).

Transmembrane regions (helical) follow at residues 6–26, 31–51, 61–81, and 85–105; these read LLFF…YLWL, SAWL…LLTL, AAYG…VDGV, and ALDW…VSGW.

The protein belongs to the UPF0060 family.

It localises to the cell inner membrane. The protein is UPF0060 membrane protein Spro_2289 of Serratia proteamaculans (strain 568).